Consider the following 149-residue polypeptide: Acyl carrier protein 1, chloroplastic (149 aa).

A chloroplast-targeting transit peptide spans 1–59 (MAHCLAAVSSFSPSAVRRRLSSQVANVVSSRSSVSFHSRQMSFVSISSRPSSLRFKICC). The Carrier domain maps to 69-144 (KETVDKVCMI…DAANLIEKLV (76 aa)). Ser104 is subject to O-(pantetheine 4'-phosphoryl)serine.

It belongs to the acyl carrier protein (ACP) family. 4'-phosphopantetheine is transferred from CoA to a specific serine of apo-ACP by acpS. This modification is essential for activity because fatty acids are bound in thioester linkage to the sulfhydryl of the prosthetic group.

It localises to the plastid. It is found in the chloroplast. The protein operates within lipid metabolism; fatty acid biosynthesis. In terms of biological role, carrier of the growing fatty acid chain in fatty acid biosynthesis. The protein is Acyl carrier protein 1, chloroplastic (ACL1.1) of Hordeum vulgare (Barley).